A 228-amino-acid polypeptide reads, in one-letter code: Phosphoribosylformylglycinamidine synthase subunit PurQ (228 aa).

Positions 3 to 226 (FAVIVFPGSN…VKYWRETHVV (224 aa)) constitute a Glutamine amidotransferase type-1 domain. Cys86 functions as the Nucleophile in the catalytic mechanism. Catalysis depends on residues His195 and Glu197.

In terms of assembly, part of the FGAM synthase complex composed of 1 PurL, 1 PurQ and 2 PurS subunits.

It localises to the cytoplasm. The enzyme catalyses N(2)-formyl-N(1)-(5-phospho-beta-D-ribosyl)glycinamide + L-glutamine + ATP + H2O = 2-formamido-N(1)-(5-O-phospho-beta-D-ribosyl)acetamidine + L-glutamate + ADP + phosphate + H(+). It carries out the reaction L-glutamine + H2O = L-glutamate + NH4(+). It participates in purine metabolism; IMP biosynthesis via de novo pathway; 5-amino-1-(5-phospho-D-ribosyl)imidazole from N(2)-formyl-N(1)-(5-phospho-D-ribosyl)glycinamide: step 1/2. In terms of biological role, part of the phosphoribosylformylglycinamidine synthase complex involved in the purines biosynthetic pathway. Catalyzes the ATP-dependent conversion of formylglycinamide ribonucleotide (FGAR) and glutamine to yield formylglycinamidine ribonucleotide (FGAM) and glutamate. The FGAM synthase complex is composed of three subunits. PurQ produces an ammonia molecule by converting glutamine to glutamate. PurL transfers the ammonia molecule to FGAR to form FGAM in an ATP-dependent manner. PurS interacts with PurQ and PurL and is thought to assist in the transfer of the ammonia molecule from PurQ to PurL. This Geobacillus sp. (strain WCH70) protein is Phosphoribosylformylglycinamidine synthase subunit PurQ.